The chain runs to 202 residues: Transcription antitermination protein NusB (202 aa).

Residues 1–11 (MTEERTADNKA) show a composition bias toward basic and acidic residues. 2 disordered regions span residues 1 to 21 (MTEE…KRHG) and 169 to 202 (SAAK…SDEA).

It belongs to the NusB family.

In terms of biological role, involved in transcription antitermination. Required for transcription of ribosomal RNA (rRNA) genes. Binds specifically to the boxA antiterminator sequence of the ribosomal RNA (rrn) operons. In Corynebacterium jeikeium (strain K411), this protein is Transcription antitermination protein NusB.